A 561-amino-acid chain; its full sequence is Carbohydrate sulfotransferase 15 (561 aa).

Topologically, residues 1–80 (MRHCINCCIQ…FLRFRKGKRC (80 aa)) are cytoplasmic. A helical; Signal-anchor for type II membrane protein transmembrane segment spans residues 81 to 101 (SLVFGLIIMTLVMASYILSGA). Over 102 to 561 (HQELLISSPF…DDEAFAWKTT (460 aa)) the chain is Lumenal. Position 263 to 267 (263 to 267 (KCGTT)) interacts with 3'-phosphoadenylyl sulfate. Asn-364 carries an N-linked (GlcNAc...) asparagine glycan. Residues Arg-392 and Ser-400 each coordinate 3'-phosphoadenylyl sulfate.

Belongs to the sulfotransferase 1 family. Homodimer; disulfide-linked (Potential). The relevance of homodimerization is however unsure. May interact with phosphorylated proteins in resting B-cells, including HCK. Requires a divalent metal cation as cofactor. Glutathione is required as a cofactor. Glycosylated.

The protein resides in the golgi apparatus membrane. The enzyme catalyses dermatan 4'-sulfate + n 3'-phosphoadenylyl sulfate = dermatan 4',6'-bissulfate + n adenosine 3',5'-bisphosphate + n H(+). It catalyses the reaction chondroitin 4'-sulfate + n 3'-phosphoadenylyl sulfate = chondroitin 4',6'-bissulfate + n adenosine 3',5'-bisphosphate + n H(+). With respect to regulation, inhibited by phenyl beta-GalNAc(4,6-SO(4)). In terms of biological role, sulfotransferase that transfers sulfate from 3'-phosphoadenosine 5'-phosphosulfate (PAPS) to the C-6 hydroxyl group of the GalNAc 4-sulfate residue of chondroitin sulfate A and forms chondroitin sulfate E containing GlcA-GalNAc(4,6-SO(4)) repeating units. It also transfers sulfate to a unique non-reducing terminal sequence, GalNAc(4SO4)-GlcA(2SO4)-GalNAc(6SO4), to yield a highly sulfated structure similar to the structure found in thrombomodulin chondroitin sulfate. May also act as a B-cell receptor involved in BCR ligation-mediated early activation that mediate regulatory signals key to B-cell development and/or regulation of B-cell-specific RAG expression; however such results are unclear in vivo. This is Carbohydrate sulfotransferase 15 (Chst15) from Rattus norvegicus (Rat).